Consider the following 525-residue polypeptide: MCGILLHYCPNNNYLNDELIEFPEGTEFGDTTCTNESSIFNKIIPYIAARGPNYSSLRAVKAYRISWFSSVLSLRQPFTKQSINVDDRYFLQFNGELYNKEISQGDNDSLYIASMLQNLKEGMGVIDVIKSLEGEYAYTIYDVNSSKLYFGRDPIGRRSLSYSVTPDNELYVASVTGSAGSFQDCIGGVIYEYDTRTKLLNSNQRSHLPYEVTSEIDLNFTSLSEVSKNLYAVLRDSVKKRVESIHPRHIENSPIAVLFSGGIDCSVIVALICEVLQENDYKCGKPVIELLNVSFENPRTGLFPSDTPDRKLSINSAKTLQNLYPNVDIKLVEVDVPYDEYLKWKPFVINLMYPKQTEMDLSIAIAFFFASRGRGFLTSLNGERTPYQRHGIVLFSGLGADELYGGYHKFANKPPHELVEELTRQINNIYDRNLNRDDKVIAHNGVEVRYPFLDEYVIKLSTAEIPINFKVNKLILRKVASQYLKLDGISSEPKRAIQFGAKSAKMTKDGNKHGTDLLKENRNCS.

Cys-2 acts as the For GATase activity in catalysis. In terms of domain architecture, Glutamine amidotransferase type-2 spans 2–209 (CGILLHYCPN…LNSNQRSHLP (208 aa)). The 314-residue stretch at 210 to 523 (YEVTSEIDLN…GTDLLKENRN (314 aa)) folds into the Asparagine synthetase domain. The interval 503–525 (SAKMTKDGNKHGTDLLKENRNCS) is disordered. The segment covering 506-525 (MTKDGNKHGTDLLKENRNCS) has biased composition (basic and acidic residues).

Its subcellular location is the cytoplasm. The sequence is that of Asparagine synthetase domain-containing protein YML096W from Saccharomyces cerevisiae (strain ATCC 204508 / S288c) (Baker's yeast).